The chain runs to 132 residues: Small ribosomal subunit protein uS11 (132 aa).

The protein belongs to the universal ribosomal protein uS11 family. In terms of assembly, part of the 30S ribosomal subunit. Interacts with proteins S7 and S18. Binds to IF-3.

In terms of biological role, located on the platform of the 30S subunit, it bridges several disparate RNA helices of the 16S rRNA. Forms part of the Shine-Dalgarno cleft in the 70S ribosome. This is Small ribosomal subunit protein uS11 from Chlamydia trachomatis serovar L2 (strain ATCC VR-902B / DSM 19102 / 434/Bu).